A 352-amino-acid polypeptide reads, in one-letter code: Deoxyhypusine synthase-like protein (352 aa).

This sequence belongs to the deoxyhypusine synthase family.

The sequence is that of Deoxyhypusine synthase-like protein from Coxiella burnetii (strain Dugway 5J108-111).